The sequence spans 320 residues: Phosphoribosylaminoimidazole-succinocarboxamide synthase (320 aa).

The disordered stretch occupies residues Glu-283–Thr-303.

The protein belongs to the SAICAR synthetase family.

The enzyme catalyses 5-amino-1-(5-phospho-D-ribosyl)imidazole-4-carboxylate + L-aspartate + ATP = (2S)-2-[5-amino-1-(5-phospho-beta-D-ribosyl)imidazole-4-carboxamido]succinate + ADP + phosphate + 2 H(+). The protein operates within purine metabolism; IMP biosynthesis via de novo pathway; 5-amino-1-(5-phospho-D-ribosyl)imidazole-4-carboxamide from 5-amino-1-(5-phospho-D-ribosyl)imidazole-4-carboxylate: step 1/2. The sequence is that of Phosphoribosylaminoimidazole-succinocarboxamide synthase from Rhodopirellula baltica (strain DSM 10527 / NCIMB 13988 / SH1).